The chain runs to 118 residues: Small ribosomal subunit protein uS13 (118 aa).

The tract at residues Arg92–Lys118 is disordered.

Belongs to the universal ribosomal protein uS13 family. As to quaternary structure, part of the 30S ribosomal subunit. Forms a loose heterodimer with protein S19. Forms two bridges to the 50S subunit in the 70S ribosome.

Its function is as follows. Located at the top of the head of the 30S subunit, it contacts several helices of the 16S rRNA. In the 70S ribosome it contacts the 23S rRNA (bridge B1a) and protein L5 of the 50S subunit (bridge B1b), connecting the 2 subunits; these bridges are implicated in subunit movement. Contacts the tRNAs in the A and P-sites. The sequence is that of Small ribosomal subunit protein uS13 from Pseudomonas putida (strain ATCC 700007 / DSM 6899 / JCM 31910 / BCRC 17059 / LMG 24140 / F1).